We begin with the raw amino-acid sequence, 311 residues long: Malate dehydrogenase (311 aa).

NAD(+) contacts are provided by residues 7–13 and aspartate 34; that span reads GAAGGIG. 2 residues coordinate substrate: arginine 81 and arginine 87. NAD(+)-binding positions include asparagine 94 and 117–119; that span reads ITN. 2 residues coordinate substrate: asparagine 119 and arginine 153. The active-site Proton acceptor is histidine 177. Methionine 227 serves as a coordination point for NAD(+).

This sequence belongs to the LDH/MDH superfamily. MDH type 1 family. In terms of assembly, homodimer.

The catalysed reaction is (S)-malate + NAD(+) = oxaloacetate + NADH + H(+). In terms of biological role, catalyzes the reversible oxidation of malate to oxaloacetate. This Shewanella pealeana (strain ATCC 700345 / ANG-SQ1) protein is Malate dehydrogenase.